The primary structure comprises 357 residues: Alanine racemase (357 aa).

The active-site Proton acceptor; specific for D-alanine is the K33. Residue K33 is modified to N6-(pyridoxal phosphate)lysine. Residue R129 coordinates substrate. Y253 (proton acceptor; specific for L-alanine) is an active-site residue. M301 lines the substrate pocket.

It belongs to the alanine racemase family. The cofactor is pyridoxal 5'-phosphate.

It catalyses the reaction L-alanine = D-alanine. It functions in the pathway amino-acid biosynthesis; D-alanine biosynthesis; D-alanine from L-alanine: step 1/1. In terms of biological role, catalyzes the interconversion of L-alanine and D-alanine. May also act on other amino acids. The chain is Alanine racemase (alr) from Pseudomonas syringae pv. syringae (strain B728a).